The primary structure comprises 84 residues: Small ribosomal subunit protein bS18A (84 aa).

The protein belongs to the bacterial ribosomal protein bS18 family. Part of the 30S ribosomal subunit. Forms a tight heterodimer with protein bS6.

Functionally, binds as a heterodimer with protein bS6 to the central domain of the 16S rRNA, where it helps stabilize the platform of the 30S subunit. The chain is Small ribosomal subunit protein bS18A from Frankia alni (strain DSM 45986 / CECT 9034 / ACN14a).